The following is a 474-amino-acid chain: Immunoglobulin heavy constant mu (474 aa).

Positions Gly1–Val105 are CH1. The Extracellular segment spans residues Gly1–Thr450. Ig-like domains lie at Pro6–Pro102, Pro111–Ser211, Pro229–Ser319, and Pro329–Asp430. 2 cysteine pairs are disulfide-bonded: Cys28–Cys88 and Cys134–Cys197. Asn46 is a glycosylation site (N-linked (GlcNAc...) (complex) asparagine). Residues Ile106–Asp217 are CH2. N-linked (GlcNAc...) (complex) asparagine glycosylation occurs at Asn209. The segment at Gln218 to Gly323 is CH3. 2 disulfides stabilise this stretch: Cys244–Cys303 and Cys351–Cys413. Asn272 and Asn279 each carry an N-linked (GlcNAc...) asparagine glycan. Residues Val324 to Ser452 form a CH4 region. Residues Val437 to Thr453 form an important for IgM oligomerization region. Asp440 carries N-linked (GlcNAc...) asparagine glycosylation. The chain crosses the membrane as a helical span at residues Ala451–Phe471. Residues Lys472–Lys474 lie on the Cytoplasmic side of the membrane.

The basic structural unit of both sIgM and mIgM molecules consists of two identical heavy chains and two identical light chains; disulfide-linked. N-terminal variable regions of the heavy and light chains form the antigen binding sites, whereas the C-terminal constant regions of the heavy chains interact with immune receptors to mediate effector functions. As to quaternary structure, part of IgM antibody. Forms high order oligomers, homopentamers stabilized by the JCHAIN and homohexamers that lack JCHAIN. The oligomerization amplifies an inherently low affinity of IgM antibodies for the antigen by multi-point attachment (avidity). Adjacent IgM protomers associate via interchain disulfide links to form an asymmetric pentameric structure with a 50 degree gap. A single copy of JCHAIN is covalently linked to the first and the fifth IgM monomers via interchain disulfide bonds thus closing the pentamer ring. Only JCHAIN-containing IgM binds PIGR secretory component (via D1-CDR1 region); this interaction is a prerequisite for IgM transcytosis across mucosal epithelium. Pentameric sIgM interacts (via CH4 domain) with FCRM (via Ig-like domain); the interaction is glycan-independent and multivalent theoretically involving up to eight binding sites for the IgM pentamer. Interacts with FCAMR; this interaction facilitates the endocytosis of IgM-coated microbes or IgM-antigen immune complexes. Antigen-bound IgM (via the Fc region) binds to globular domains of C1q component of the complement system, all three modules C1QA, C1QB and C1QC being involved in IgM binding; this interaction is multivalent. Pentameric sIgM (via Fc region) interacts with CD5L (via SRCR2) through interchain disulfide-linkages; this interaction protects CD5L from renal excretion and provides for high levels of CD5L in circulation. In terms of assembly, part of IgM B cell receptor complex on pre-B cells, immature and mature B cells. The BCR complex consists of one membrane-bound IgM molecule responsible for antigen binding, non-covalently associated with CD79A and CD79B signaling chains. In terms of processing, N-glycosylated; important for IgM secretion and its localization at the plasma membrane. The interaction with FCMR is glycan-independent.

It localises to the secreted. The protein localises to the cell membrane. Its function is as follows. Constant region of immunoglobulin heavy chains. Immunoglobulins, also known as antibodies, are membrane-bound or secreted glycoproteins produced by B lymphocytes. In the recognition phase of humoral immunity, the membrane-bound immunoglobulins serve as receptors which, upon binding of a specific antigen, trigger the clonal expansion and differentiation of B lymphocytes into immunoglobulins-secreting plasma cells. Secreted immunoglobulins mediate the effector phase of humoral immunity, which results in the elimination of bound antigens. The antigen binding site is formed by the variable domain of one heavy chain, together with that of its associated light chain. Thus, each immunoglobulin has two antigen binding sites with remarkable affinity for a particular antigen. The variable domains are assembled by a process called V-(D)-J rearrangement and can then be subjected to somatic hypermutations which, after exposure to antigen and selection, allow affinity maturation for a particular antigen. In terms of biological role, constant region of secreted IgM (sIgM), also known as the Fc region of IgM antibody. Able to multimerize, forms high order polymers, mainly pentamers and occasionally hexamers, providing for multivalency and high avidity recognition of antigens. Natural sIgM are polyreactive and recognize conserved self- and pathogen-derived structures, whereas immune sIgM are secreted only upon exposure to pathogens and are antigen-specific. Both natural and immune sIgM are required for an efficient humoral immune response to infection. Mediates sIgM effector functions mostly via Fc receptors and the complement system. On lymphoid cells binds high-affinity Fc receptor FCMR and promotes induction of an efficient neutralizing IgG response while maintaining tolerance to self-antigens. Recruits C1q complement component to initiate the classical complement pathway, facilitating the recognition and neutralization of pathogens by the host. Together with C1q and mannose-binding lectin promotes the phagocytosis of apoptotic cells by macrophages, ensuring the clearance of potential autoimmune epitopes from tissues. Involved in mucosal immunity. It is transported by transcytosis across mucosal epithelium by PIGR and secreted on the apical side in complex with PIGR secretory component to scan mucosal lining for pathogens. IgM-antigen complexes undergo FCMR-mediated retrotranscytosis across mucosal M cells toward antigen-presenting cells in mucosal lymphoid tissues. Constant region of membrane-bound IgM, part of the B cell receptor complex (BCR). IgM BCR provides constitutive tonic signaling for B cell survival. Mediates pre-BCR signaling that regulates B cell selection and rearrangement of Ig genes via allelic exclusion. In Homo sapiens (Human), this protein is Immunoglobulin heavy constant mu.